We begin with the raw amino-acid sequence, 319 residues long: GPI-specific phospholipase A2-like PGAP3 (319 aa).

Positions 1–23 are cleaved as a signal peptide; that stretch reads MAGRTARLVLLAGAAALASGSQG. Over 24–101 the chain is Lumenal; sequence DREPVYRDCV…GKWPFSRFLC (78 aa). Asn-40 is a glycosylation site (N-linked (GlcNAc...) asparagine). The chain crosses the membrane as a helical span at residues 102-122; it reads FQEPASAVASFLNGLASLVML. Residues 123–135 lie on the Cytoplasmic side of the membrane; the sequence is CRYRTSVPASSPM. A helical membrane pass occupies residues 136–156; the sequence is YPTCVAFAWVSLNAWFWSTVF. Residues 157–169 lie on the Lumenal side of the membrane; it reads HTRDTDLTEKMDY. The chain crosses the membrane as a helical span at residues 170-190; the sequence is FCASTVILHSIYLCCVRTVGL. Topologically, residues 191–200 are cytoplasmic; that stretch reads QHPAMASAFR. A helical transmembrane segment spans residues 201–221; sequence ALLLLLLTAHVSYLSLIHFDY. At 222-224 the chain is on the lumenal side; that stretch reads GYN. A helical transmembrane segment spans residues 225–245; it reads MAANVAIGLLNAAWWLAWCLW. Residues 246–257 lie on the Cytoplasmic side of the membrane; that stretch reads NQRLPHVHKCVA. A helical transmembrane segment spans residues 258 to 278; sequence VVLLLQGLSLLELLDFPPLFW. Over 279 to 281 the chain is Lumenal; the sequence is VLD. Residues 282-302 traverse the membrane as a helical segment; the sequence is AHAIWHISTIPVHVLFFSFLE. Over 303-319 the chain is Cytoplasmic; that stretch reads DDSLYLLKESEAKVKLD.

Belongs to the PGAP3 family.

It is found in the golgi apparatus membrane. Involved in the fatty acid remodeling steps of GPI-anchor maturation where the unsaturated acyl chain at sn-2 of inositol phosphate is replaced by a saturated stearoyl chain. May catalyze the first step of the fatty acid remodeling, by removing the unsaturated acyl chain at sn-2 of inositol phosphate, generating a lyso-GPI intermediate. The fatty acid remodeling steps is critical for the integration of GPI-APs into lipid rafts. The chain is GPI-specific phospholipase A2-like PGAP3 from Bos taurus (Bovine).